Here is a 183-residue protein sequence, read N- to C-terminus: CKLF-like MARVEL transmembrane domain-containing protein 6 (183 aa).

M1 bears the N-acetylmethionine mark. Over 1–39 (MENGAVYSPTTEEDPGPARGPRSGLAAYFFMGRLPLLRR) the chain is Cytoplasmic. S8 is subject to Phosphoserine. The region spanning 33–160 (RLPLLRRVLK…DFITMLYEKR (128 aa)) is the MARVEL domain. Residues 40–60 (VLKGLQLLLSLLAFICEEVVS) traverse the membrane as a helical segment. Over 61-67 (QCTLCGG) the chain is Extracellular. The chain crosses the membrane as a helical span at residues 68–88 (LYFFEFVSCSAFLLSLLILIV). Residues 89 to 106 (YCTPFYERVDTTKVKSSD) lie on the Cytoplasmic side of the membrane. A helical membrane pass occupies residues 107 to 127 (FYITLGTGCVFLLASIIFVST). The Extracellular segment spans residues 128-134 (HDRTSAE). A helical membrane pass occupies residues 135–155 (IAAIVFGFIASFMFLLDFITM). Residues 156–183 (LYEKRQESQLRKPENTTRAEALTEPLNA) lie on the Cytoplasmic side of the membrane. A Phosphothreonine modification is found at T171.

Belongs to the chemokine-like factor family. Interacts with PD-L1/CD274 (via transmembrane domain); the interaction is direct. Interacts with CMTM4. Interacts with CD58, ARG1, ENO1 and TMPO. Expressed in the leukocytes, placenta and testis.

Its subcellular location is the cell membrane. The protein resides in the early endosome membrane. The protein localises to the recycling endosome membrane. Functionally, master regulator of recycling and plasma membrane expression of PD-L1/CD274, an immune inhibitory ligand critical for immune tolerance to self and antitumor immunity. Associates with both constitutive and IFNG-induced PD-L1/CD274 at recycling endosomes, where it protects PD-L1/CD274 from being targeted for lysosomal degradation, likely by preventing its STUB1-mediated ubiquitination. May stabilize PD-L1/CD274 expression on antigen presenting cells and potentiates inhibitory signaling by PDCD1/CD279, its receptor on T-cells, ultimately triggering T-cell anergy. The sequence is that of CKLF-like MARVEL transmembrane domain-containing protein 6 from Homo sapiens (Human).